Reading from the N-terminus, the 339-residue chain is DNA-directed RNA polymerase subunit alpha (339 aa).

Residues 1-233 (MVREEITGST…DLFLPFIHTE (233 aa)) form an alpha N-terminal domain (alpha-NTD) region. Residues 266 to 339 (GIPLNCIFID…IDLPKNKFSL (74 aa)) form an alpha C-terminal domain (alpha-CTD) region.

It belongs to the RNA polymerase alpha chain family. In plastids the minimal PEP RNA polymerase catalytic core is composed of four subunits: alpha, beta, beta', and beta''. When a (nuclear-encoded) sigma factor is associated with the core the holoenzyme is formed, which can initiate transcription.

It is found in the plastid. The protein resides in the chloroplast. It catalyses the reaction RNA(n) + a ribonucleoside 5'-triphosphate = RNA(n+1) + diphosphate. DNA-dependent RNA polymerase catalyzes the transcription of DNA into RNA using the four ribonucleoside triphosphates as substrates. The chain is DNA-directed RNA polymerase subunit alpha from Saccharum hybrid (Sugarcane).